We begin with the raw amino-acid sequence, 77 residues long: Membrane-associated ATPase epsilon chain (77 aa).

The protein to E.hirae NtpH. In terms of assembly, sul-ATPase is composed of six (or maybe five) subunits: alpha, beta, delta, gamma, C (proteolipid), and possibly epsilon.

It catalyses the reaction ATP + H2O + 4 H(+)(in) = ADP + phosphate + 5 H(+)(out). In Sulfolobus acidocaldarius (strain ATCC 33909 / DSM 639 / JCM 8929 / NBRC 15157 / NCIMB 11770), this protein is Membrane-associated ATPase epsilon chain (atpE).